Here is a 322-residue protein sequence, read N- to C-terminus: Large ribosomal subunit protein uL10 (322 aa).

A disordered region spans residues 294–322 (APAAAAKAEKEEEPAEESDDEMGFGLFDE). Residues 304-322 (EEEPAEESDDEMGFGLFDE) show a composition bias toward acidic residues.

The protein belongs to the universal ribosomal protein uL10 family. In terms of assembly, P0 forms a pentameric complex by interaction with dimers of P1 and P2. Post-translationally, phosphorylated.

Functionally, ribosomal protein P0 is the functional equivalent of E.coli protein L10. In Lupinus luteus (European yellow lupine), this protein is Large ribosomal subunit protein uL10.